The following is a 152-amino-acid chain: UPF0266 membrane protein Ent638_2389 (152 aa).

Helical transmembrane passes span 6–26 (IVLVLFIVALLAYAFYDEFIM), 45–65 (VDAFIFAGLLAILIYNNVMSQ), and 67–87 (ALLTTWLLCVLALMAFYLFWI).

It belongs to the UPF0266 family.

The protein localises to the cell inner membrane. The polypeptide is UPF0266 membrane protein Ent638_2389 (Enterobacter sp. (strain 638)).